We begin with the raw amino-acid sequence, 402 residues long: uncharacterized protein (402 aa).

The signal sequence occupies residues 1-44; the sequence is MLEKNLLPEILLAIHMPLNKGLTRVKAIVIIIVVIIAVIAGVVG. Positions 53-79 are disordered; sequence NSVTTSSSSTTTSSSLSSTSISSSTTN.

Belongs to the bacterial solute-binding protein 1 family. WtpA subfamily.

This is an uncharacterized protein from Saccharolobus solfataricus (strain ATCC 35092 / DSM 1617 / JCM 11322 / P2) (Sulfolobus solfataricus).